Reading from the N-terminus, the 280-residue chain is ESX-1 secretion-associated protein EspJ (280 aa).

A Phosphoserine modification is found at Ser-70. 2 stretches are compositionally biased toward low complexity: residues 167-181 (QTIS…QSAQ) and 246-280 (PAQA…TTTL). Residues 167–280 (QTISQTAQQA…TPAPSTTTTL (114 aa)) are disordered.

As to quaternary structure, residues 76-280 interact with EsxB and an artificial EsxB-EsxA heterodimer. Post-translationally, phosphorylated at Ser-70.

It is found in the secreted. Functionally, could be involved in regulation of growth and intracellular survival. This Mycobacterium tuberculosis (strain ATCC 25618 / H37Rv) protein is ESX-1 secretion-associated protein EspJ.